A 227-amino-acid chain; its full sequence is Cytochrome c oxidase subunit 2 (227 aa).

At 1–14 the chain is on the mitochondrial intermembrane side; that stretch reads MAYPFQLGFQDATS. A helical membrane pass occupies residues 15-45; the sequence is PIMEELLHFHDHTLMIVFLISSLVLYIISSM. Topologically, residues 46-59 are mitochondrial matrix; that stretch reads LTTKLTHTSTMDAQ. A helical transmembrane segment spans residues 60 to 87; the sequence is EVETIWTILPAIILILIALPSLRILYMM. Residues 88–227 are Mitochondrial intermembrane-facing; sequence DEINNPSLTV…HFEEWSASML (140 aa). The Cu cation site is built by H161, C196, E198, C200, H204, and M207. E198 is a Mg(2+) binding site.

Belongs to the cytochrome c oxidase subunit 2 family. In terms of assembly, component of the cytochrome c oxidase (complex IV, CIV), a multisubunit enzyme composed of 14 subunits. The complex is composed of a catalytic core of 3 subunits MT-CO1, MT-CO2 and MT-CO3, encoded in the mitochondrial DNA, and 11 supernumerary subunits COX4I, COX5A, COX5B, COX6A, COX6B, COX6C, COX7A, COX7B, COX7C, COX8 and NDUFA4, which are encoded in the nuclear genome. The complex exists as a monomer or a dimer and forms supercomplexes (SCs) in the inner mitochondrial membrane with NADH-ubiquinone oxidoreductase (complex I, CI) and ubiquinol-cytochrome c oxidoreductase (cytochrome b-c1 complex, complex III, CIII), resulting in different assemblies (supercomplex SCI(1)III(2)IV(1) and megacomplex MCI(2)III(2)IV(2)). Found in a complex with TMEM177, COA6, COX18, COX20, SCO1 and SCO2. Interacts with TMEM177 in a COX20-dependent manner. Interacts with COX20. Interacts with COX16. It depends on Cu cation as a cofactor.

The protein resides in the mitochondrion inner membrane. The enzyme catalyses 4 Fe(II)-[cytochrome c] + O2 + 8 H(+)(in) = 4 Fe(III)-[cytochrome c] + 2 H2O + 4 H(+)(out). Functionally, component of the cytochrome c oxidase, the last enzyme in the mitochondrial electron transport chain which drives oxidative phosphorylation. The respiratory chain contains 3 multisubunit complexes succinate dehydrogenase (complex II, CII), ubiquinol-cytochrome c oxidoreductase (cytochrome b-c1 complex, complex III, CIII) and cytochrome c oxidase (complex IV, CIV), that cooperate to transfer electrons derived from NADH and succinate to molecular oxygen, creating an electrochemical gradient over the inner membrane that drives transmembrane transport and the ATP synthase. Cytochrome c oxidase is the component of the respiratory chain that catalyzes the reduction of oxygen to water. Electrons originating from reduced cytochrome c in the intermembrane space (IMS) are transferred via the dinuclear copper A center (CU(A)) of subunit 2 and heme A of subunit 1 to the active site in subunit 1, a binuclear center (BNC) formed by heme A3 and copper B (CU(B)). The BNC reduces molecular oxygen to 2 water molecules using 4 electrons from cytochrome c in the IMS and 4 protons from the mitochondrial matrix. The chain is Cytochrome c oxidase subunit 2 (MT-CO2) from Equus caballus (Horse).